A 678-amino-acid polypeptide reads, in one-letter code: MTTPEGAMYVAWEDLTVVIPNFGEGATKRLLNGVNGCGEPNRILAIMGPSGSGKSTLLDALAGRLAGNVVMSGKVLVNGKKRRLDFGAAAYVTQEDVLLGTLTVRESISYSAHLRLPSKLTREEISDIVEATITDMGLEECSDRTIGNWHLRGISGGEKKRLSIALEVLTKPSLLFLDEPTSGLDSASAFFVVQILRNIASSGKTVVSSIHQPSGEVFALFDDLLLLSGGETVYFGEAESATKFFGEAGFPCPSRRNPSDHFLRCVNSDFDNVTAALVESRRINDSSFSLHQLHETTNTLDPLDDIPTAEIRTTLVRKFKCSLYAAASRARIQEIASIVGIVTERKKGSQTNWWKQLRILTQRSFINMSRDLGYYWMRIAVYIVLSICVGSIFFNVGRNHTNVMSTAACGGFMAGFMTFMSIGGFQSFIEEMKVFSRERLNGHYGVAVYTVSNLLSSLPFIILMCLSTSSITIYMVRFQSGGSHFFYNCLDLICAITTVESCMMMIASVVPNFLMGVMLGAGYIGIMVLSAGFFRFFPDLPMVFWRYPVSYINYGAWALQGAYKNEMIGVEYDSPLPLVPKMKGELILQTVLGINPESSKWLDLAVVMMILIGYRIAFFAILKFREKVFPVIHMLYTKRTLSHIQKRPSFRRMTPFPSRRYPVHHALSSQEGLNSPLH.

The 245-residue stretch at 10-254 folds into the ABC transporter domain; the sequence is VAWEDLTVVI…FGEAGFPCPS (245 aa). 48–55 contributes to the ATP binding site; sequence GPSGSGKS. Residues 355–567 form the ABC transmembrane type-2 domain; it reads KQLRILTQRS…ALQGAYKNEM (213 aa). 6 consecutive transmembrane segments (helical) span residues 374 to 394, 409 to 429, 446 to 466, 490 to 510, 513 to 533, and 602 to 622; these read YYWM…SIFF, CGGF…QSFI, VAVY…LMCL, LDLI…ASVV, FLMG…SAGF, and LDLA…FAIL. A Phosphoserine modification is found at Ser-658.

This sequence belongs to the ABC transporter superfamily. ABCG family. Eye pigment precursor importer (TC 3.A.1.204) subfamily.

It is found in the membrane. The chain is ABC transporter G family member 13 (ABCG13) from Arabidopsis thaliana (Mouse-ear cress).